A 366-amino-acid polypeptide reads, in one-letter code: UDP-N-acetylglucosamine--N-acetylmuramyl-(pentapeptide) pyrophosphoryl-undecaprenol N-acetylglucosamine transferase (366 aa).

UDP-N-acetyl-alpha-D-glucosamine is bound by residues 17–19 (TGG), Asn-129, Arg-169, Ser-195, Ile-251, 270–275 (ALTVSE), and Gln-296.

The protein belongs to the glycosyltransferase 28 family. MurG subfamily.

Its subcellular location is the cell inner membrane. The catalysed reaction is di-trans,octa-cis-undecaprenyl diphospho-N-acetyl-alpha-D-muramoyl-L-alanyl-D-glutamyl-meso-2,6-diaminopimeloyl-D-alanyl-D-alanine + UDP-N-acetyl-alpha-D-glucosamine = di-trans,octa-cis-undecaprenyl diphospho-[N-acetyl-alpha-D-glucosaminyl-(1-&gt;4)]-N-acetyl-alpha-D-muramoyl-L-alanyl-D-glutamyl-meso-2,6-diaminopimeloyl-D-alanyl-D-alanine + UDP + H(+). The protein operates within cell wall biogenesis; peptidoglycan biosynthesis. Cell wall formation. Catalyzes the transfer of a GlcNAc subunit on undecaprenyl-pyrophosphoryl-MurNAc-pentapeptide (lipid intermediate I) to form undecaprenyl-pyrophosphoryl-MurNAc-(pentapeptide)GlcNAc (lipid intermediate II). This is UDP-N-acetylglucosamine--N-acetylmuramyl-(pentapeptide) pyrophosphoryl-undecaprenol N-acetylglucosamine transferase from Shewanella denitrificans (strain OS217 / ATCC BAA-1090 / DSM 15013).